The following is a 278-amino-acid chain: Phosphonates import ATP-binding protein PhnC 1 (278 aa).

An ABC transporter domain is found at 5–253; that stretch reads IRVDSLNKTF…FLNELYGAEG (249 aa). Residue 37 to 44 participates in ATP binding; sequence GASGSGKS.

It belongs to the ABC transporter superfamily. Phosphonates importer (TC 3.A.1.9.1) family. In terms of assembly, the complex is composed of two ATP-binding proteins (PhnC), two transmembrane proteins (PhnE) and a solute-binding protein (PhnD).

It is found in the cell inner membrane. It carries out the reaction phosphonate(out) + ATP + H2O = phosphonate(in) + ADP + phosphate + H(+). Part of the ABC transporter complex PhnCDE involved in phosphonates import. Responsible for energy coupling to the transport system. This is Phosphonates import ATP-binding protein PhnC 1 from Pseudomonas aeruginosa (strain UCBPP-PA14).